Here is a 59-residue protein sequence, read N- to C-terminus: UPF0391 membrane protein lpp2589 (59 aa).

Transmembrane regions (helical) follow at residues A5 to V25 and I30 to L50.

This sequence belongs to the UPF0391 family.

It localises to the cell membrane. This Legionella pneumophila (strain Paris) protein is UPF0391 membrane protein lpp2589.